Here is a 67-residue protein sequence, read N- to C-terminus: Cysteine-rich venom protein bucarin (67 aa).

The SCP domain occupies 13–58 (VDKHNALRRSVRPTARNMLQMEWNSNAAQNAKRFADRCTFAHSPPH).

Belongs to the CRISP family. In terms of processing, contains 8 disulfide bonds. As to expression, expressed by the venom gland.

The protein resides in the secreted. Blocks contraction of smooth muscle elicited by high potassium-induced depolarization, but does not block caffeine-stimulated contraction. May target voltage-gated calcium channels on smooth muscle. The protein is Cysteine-rich venom protein bucarin of Bungarus candidus (Malayan krait).